A 227-amino-acid polypeptide reads, in one-letter code: 2,3-bisphosphoglycerate-dependent phosphoglycerate mutase (227 aa).

Residues 7–14 (RHGFSEWN), 20–21 (TG), Arg-59, 86–89 (ERHY), Lys-97, 113–114 (RR), and 182–183 (GN) each bind substrate. His-8 acts as the Tele-phosphohistidine intermediate in catalysis. Catalysis depends on Glu-86, which acts as the Proton donor/acceptor.

It belongs to the phosphoglycerate mutase family. BPG-dependent PGAM subfamily. Homodimer.

The catalysed reaction is (2R)-2-phosphoglycerate = (2R)-3-phosphoglycerate. It participates in carbohydrate degradation; glycolysis; pyruvate from D-glyceraldehyde 3-phosphate: step 3/5. Its function is as follows. Catalyzes the interconversion of 2-phosphoglycerate and 3-phosphoglycerate. The protein is 2,3-bisphosphoglycerate-dependent phosphoglycerate mutase of Haemophilus influenzae (strain ATCC 51907 / DSM 11121 / KW20 / Rd).